Here is a 326-residue protein sequence, read N- to C-terminus: N-acetyl-gamma-glutamyl-phosphate reductase (326 aa).

Residue cysteine 155 is part of the active site.

Belongs to the NAGSA dehydrogenase family. Type 1 subfamily.

The protein resides in the cytoplasm. The catalysed reaction is N-acetyl-L-glutamate 5-semialdehyde + phosphate + NADP(+) = N-acetyl-L-glutamyl 5-phosphate + NADPH + H(+). Its pathway is amino-acid biosynthesis; L-arginine biosynthesis; N(2)-acetyl-L-ornithine from L-glutamate: step 3/4. Catalyzes the NADPH-dependent reduction of N-acetyl-5-glutamyl phosphate to yield N-acetyl-L-glutamate 5-semialdehyde. In Shewanella sediminis (strain HAW-EB3), this protein is N-acetyl-gamma-glutamyl-phosphate reductase.